Consider the following 186-residue polypeptide: Ribosome-recycling factor (186 aa).

This sequence belongs to the RRF family.

It localises to the cytoplasm. In terms of biological role, responsible for the release of ribosomes from messenger RNA at the termination of protein biosynthesis. May increase the efficiency of translation by recycling ribosomes from one round of translation to another. The sequence is that of Ribosome-recycling factor from Rickettsia massiliae (strain Mtu5).